Reading from the N-terminus, the 365-residue chain is A-type ATP synthase subunit C (365 aa).

This sequence belongs to the V-ATPase V0D/AC39 subunit family. Has multiple subunits with at least A(3), B(3), C, D, E, F, H, I and proteolipid K(x).

It localises to the cell membrane. In terms of biological role, component of the A-type ATP synthase that produces ATP from ADP in the presence of a proton gradient across the membrane. The polypeptide is A-type ATP synthase subunit C (Thermococcus kodakarensis (strain ATCC BAA-918 / JCM 12380 / KOD1) (Pyrococcus kodakaraensis (strain KOD1))).